Consider the following 230-residue polypeptide: MIFEKKTHIVEFVRRPNRFQGYVIIDGKEELVHVPNTGRCKEILIPGCRALIREENGQNRKTRFSLIGAYKGKNLINIDSQIPNKVVEEALINKKINGLEKYTKICREKTFGNSRFDFKLEDPLNNEYYLEVKGVTLEENGLCRFPDAPTERGTKHLLELIEVKNNNIGAGVLFLVQLENVKSFSPNDDTDPKFAAALKKAKSSGVDIFVYKCSVSENHIELSQSVELKL.

It belongs to the SfsA family.

The sequence is that of Sugar fermentation stimulation protein homolog from Clostridium botulinum (strain Alaska E43 / Type E3).